A 250-amino-acid chain; its full sequence is Flavin-dependent thymidylate synthase (250 aa).

Positions 7–233 constitute a ThyX domain; sequence LRVQLIAKTD…PAVFADFEVT (227 aa). Residues Ser71, 95-97, and Gln103 each bind FAD; that span reads RHR. DUMP-binding positions include 92 to 95, 103 to 107, and Arg172; these read ELIR and QLSQR. Residues 95-105 carry the ThyX motif motif; sequence RHRHFSYSQLS. FAD-binding positions include 188–190 and His194; that span reads NYR. Arg199 is a binding site for dUMP. Arg199 functions as the Involved in ionization of N3 of dUMP, leading to its activation in the catalytic mechanism.

This sequence belongs to the thymidylate synthase ThyX family. Homotetramer. The cofactor is FAD.

It catalyses the reaction dUMP + (6R)-5,10-methylene-5,6,7,8-tetrahydrofolate + NADPH + H(+) = dTMP + (6S)-5,6,7,8-tetrahydrofolate + NADP(+). The protein operates within pyrimidine metabolism; dTTP biosynthesis. Catalyzes the reductive methylation of 2'-deoxyuridine-5'-monophosphate (dUMP) to 2'-deoxythymidine-5'-monophosphate (dTMP) while utilizing 5,10-methylenetetrahydrofolate (mTHF) as the methyl donor, and NADPH and FADH(2) as the reductant. The polypeptide is Flavin-dependent thymidylate synthase (Mycobacterium bovis (strain ATCC BAA-935 / AF2122/97)).